The following is a 212-amino-acid chain: Uracil phosphoribosyltransferase (212 aa).

5-phospho-alpha-D-ribose 1-diphosphate is bound by residues arginine 78, arginine 103, and 130 to 138 (DPMLATGGS). Residues isoleucine 193 and 198 to 200 (GDA) each bind uracil. Residue aspartate 199 participates in 5-phospho-alpha-D-ribose 1-diphosphate binding.

It belongs to the UPRTase family. Mg(2+) is required as a cofactor.

The catalysed reaction is UMP + diphosphate = 5-phospho-alpha-D-ribose 1-diphosphate + uracil. It functions in the pathway pyrimidine metabolism; UMP biosynthesis via salvage pathway; UMP from uracil: step 1/1. Its activity is regulated as follows. Allosterically activated by GTP. Functionally, catalyzes the conversion of uracil and 5-phospho-alpha-D-ribose 1-diphosphate (PRPP) to UMP and diphosphate. The polypeptide is Uracil phosphoribosyltransferase (Ectopseudomonas mendocina (strain ymp) (Pseudomonas mendocina)).